Reading from the N-terminus, the 293-residue chain is Inhibitory synaptic factor 1 (293 aa).

A disordered region spans residues 1 to 26 (MNIRGAPDLGQPSDDPSSGGERERIR). The stretch at 30–63 (KMVIGQLEGILRELKEVAKELREVVSQIDKLTSD) forms a coiled coil. Disordered stretches follow at residues 120 to 186 (TPSD…RERV) and 200 to 293 (DDEE…RGKN). A compositionally biased stretch (polar residues) spans 171–180 (VKSQLPQRTP). The segment covering 200 to 215 (DDEEGDGEQEVEEEEV) has biased composition (acidic residues). Polar residues-rich tracts occupy residues 243-256 (SPLTSRHSGSTLAP) and 264-286 (RNSSTQTVSDKSTQTVLPYTATR).

It belongs to the INSYN1 family. Interacts with GPHN.

It localises to the postsynaptic density. In terms of biological role, component of the protein machinery at the inhibitory synapses, probably acting as a scaffold. Inhibitory synapses dampen neuronal activity through postsynaptic hyperpolarization. This synaptic inhibition is fundamental for the functioning of the central nervous system, shaping and orchestrating the flow of information through neuronal networks to generate a precise neural code. The chain is Inhibitory synaptic factor 1 from Homo sapiens (Human).